The chain runs to 238 residues: Transcriptional repressor ThaA (238 aa).

Positions 169-234 (IPGEIARVSL…HAAVKATLVG (66 aa)) constitute an HTH luxR-type domain. The H-T-H motif DNA-binding region spans 193 to 212 (VSEISSILQMSVRNINFHIQ).

Belongs to the autoinducer-regulated transcriptional regulatory protein family.

Functionally, represses thailandamide production. This Burkholderia thailandensis (strain ATCC 700388 / DSM 13276 / CCUG 48851 / CIP 106301 / E264) protein is Transcriptional repressor ThaA.